An 827-amino-acid chain; its full sequence is Villin-1 (827 aa).

The tract at residues 1 to 126 (MTKLSAQVKG…IRKGGVASGM (126 aa)) is necessary for homodimerization. Residues 1-734 (MTKLSAQVKG…YEDLKAELGN (734 aa)) are core. Residues 27–76 (MQMVPVPSNSFGSFFDGDCYVIQAIHKTGSNLSYDIHYWIGQASSQDEQG) form a Gelsolin-like 1 repeat. LPA/PIP2-binding site stretches follow at residues 112 to 119 (KKGIVIRK) and 138 to 146 (RLLHVKGKR). 2 Gelsolin-like repeats span residues 148–188 (VVAG…MERL) and 265–309 (VVVR…QEKK). A Phosphoserine modification is found at S366. Gelsolin-like repeat units follow at residues 407 to 457 (NLEL…DEIT), 528 to 568 (TKAF…DERE), and 631 to 672 (FLAT…DEKK). Position 735 is a phosphoserine (S735). The interval 735–827 (SGDWSQITAE…QNLKKEKGLF (93 aa)) is headpiece. Residues 761–827 (SGPLPIFPLE…QNLKKEKGLF (67 aa)) enclose the HP domain. Residues 816–824 (KQQNLKKEK) are LPA/PIP2-binding site 3.

Belongs to the villin/gelsolin family. Monomer. Homodimer; homodimerization is necessary for actin-bundling. Associates with F-actin; phosphorylation at tyrosine residues decreases the association with F-actin. Interacts (phosphorylated at C-terminus tyrosine phosphorylation sites) with PLCG1 (via the SH2 domains). Interacts (phosphorylated form) with PLCG1; the interaction is enhanced by hepatocyte growth factor (HGF). In terms of processing, phosphorylated on tyrosine residues by SRC. The unphosphorylated form increases the initial rate of actin-nucleating activity, whereas the tyrosine-phosphorylated form inhibits actin-nucleating activity, enhances actin-bundling activity and enhances actin-severing activity by reducing high Ca(2+) requirements. The tyrosine-phosphorylated form does not regulate actin-capping activity. Tyrosine phosphorylation is essential for cell migration: tyrosine phosphorylation sites in the N-terminus half regulate actin reorganization and cell morphology, whereas tyrosine phosphorylation sites in the C-terminus half regulate cell migration via interaction with PLCG1. Tyrosine phosphorylation is induced by epidermal growth factor (EGF) and stimulates cell migration.

The protein resides in the cytoplasm. Its subcellular location is the cytoskeleton. It localises to the cell projection. The protein localises to the lamellipodium. It is found in the ruffle. The protein resides in the microvillus. Its subcellular location is the filopodium tip. It localises to the filopodium. In terms of biological role, epithelial cell-specific Ca(2+)-regulated actin-modifying protein that modulates the reorganization of microvillar actin filaments. Plays a role in the actin nucleation, actin filament bundle assembly, actin filament capping and severing. Binds phosphatidylinositol 4,5-bisphosphate (PIP2) and lysophosphatidic acid (LPA); binds LPA with higher affinity than PIP2. Binding to LPA increases its phosphorylation by SRC and inhibits all actin-modifying activities. Binding to PIP2 inhibits actin-capping and -severing activities but enhances actin-bundling activity. Regulates the intestinal epithelial cell morphology, cell invasion, cell migration and apoptosis. Protects against apoptosis induced by dextran sodium sulfate (DSS) in the gastrointestinal epithelium. Appears to regulate cell death by maintaining mitochondrial integrity. Enhances hepatocyte growth factor (HGF)-induced epithelial cell motility, chemotaxis and wound repair. This is Villin-1 (VIL1) from Bos taurus (Bovine).